We begin with the raw amino-acid sequence, 47 residues long: MAAFSLDLLAQLPEAYQAFGPLIDILPIIPVFFLLLAFVWQASVGFR.

Positions 1-10 (MAAFSLDLLA) are excised as a propeptide. A helical membrane pass occupies residues 19–39 (FGPLIDILPIIPVFFLLLAFV).

This sequence belongs to the PsbK family. As to quaternary structure, PSII is composed of 1 copy each of membrane proteins PsbA, PsbB, PsbC, PsbD, PsbE, PsbF, PsbH, PsbI, PsbJ, PsbK, PsbL, PsbM, PsbT, PsbX, PsbY, PsbZ, Psb30/Ycf12, peripheral proteins PsbO, CyanoQ (PsbQ), PsbU, PsbV and a large number of cofactors. It forms dimeric complexes.

It is found in the cellular thylakoid membrane. Functionally, one of the components of the core complex of photosystem II (PSII). PSII is a light-driven water:plastoquinone oxidoreductase that uses light energy to abstract electrons from H(2)O, generating O(2) and a proton gradient subsequently used for ATP formation. It consists of a core antenna complex that captures photons, and an electron transfer chain that converts photonic excitation into a charge separation. The polypeptide is Photosystem II reaction center protein K (Synechococcus sp. (strain WH7803)).